Reading from the N-terminus, the 497-residue chain is Putative aldehyde dehydrogenase AldA (497 aa).

Position 213–219 (213–219) interacts with NAD(+); it reads GKGSESG. Active-site residues include glutamate 257 and cysteine 291.

The protein belongs to the aldehyde dehydrogenase family.

The catalysed reaction is an aldehyde + NAD(+) + H2O = a carboxylate + NADH + 2 H(+). The chain is Putative aldehyde dehydrogenase AldA (aldA) from Staphylococcus haemolyticus (strain JCSC1435).